Consider the following 160-residue polypeptide: Small ribosomal subunit protein uS7 (160 aa).

Belongs to the universal ribosomal protein uS7 family. As to quaternary structure, part of the 30S ribosomal subunit. Contacts proteins S9 and S11.

Functionally, one of the primary rRNA binding proteins, it binds directly to 16S rRNA where it nucleates assembly of the head domain of the 30S subunit. Is located at the subunit interface close to the decoding center, probably blocks exit of the E-site tRNA. The polypeptide is Small ribosomal subunit protein uS7 (Ehrlichia chaffeensis (strain ATCC CRL-10679 / Arkansas)).